The primary structure comprises 382 residues: Mannitol-1-phosphate 5-dehydrogenase (382 aa).

Residue 3-14 (ALHFGAGNIGRG) participates in NAD(+) binding.

Belongs to the mannitol dehydrogenase family.

The catalysed reaction is D-mannitol 1-phosphate + NAD(+) = beta-D-fructose 6-phosphate + NADH + H(+). In Mannheimia succiniciproducens (strain KCTC 0769BP / MBEL55E), this protein is Mannitol-1-phosphate 5-dehydrogenase.